Consider the following 144-residue polypeptide: Ribosomal RNA large subunit methyltransferase H (144 aa).

S-adenosyl-L-methionine contacts are provided by residues Leu-68, Gly-96, and 112 to 117 (FSKLTF).

This sequence belongs to the RNA methyltransferase RlmH family. As to quaternary structure, homodimer.

Its subcellular location is the cytoplasm. It catalyses the reaction pseudouridine(1915) in 23S rRNA + S-adenosyl-L-methionine = N(3)-methylpseudouridine(1915) in 23S rRNA + S-adenosyl-L-homocysteine + H(+). Its function is as follows. Specifically methylates the pseudouridine at position 1915 (m3Psi1915) in 23S rRNA. The protein is Ribosomal RNA large subunit methyltransferase H of Mycoplasmopsis synoviae (strain 53) (Mycoplasma synoviae).